A 60-amino-acid polypeptide reads, in one-letter code: MAVQQNKKSPSKRGMHRSHNALTVPGIAVEPTTGETHMRHHISPNGFYRGRQVLKNKSEA.

Positions 1-60 (MAVQQNKKSPSKRGMHRSHNALTVPGIAVEPTTGETHMRHHISPNGFYRGRQVLKNKSEA) are disordered. The span at 9–19 (SPSKRGMHRSH) shows a compositional bias: basic residues.

This sequence belongs to the bacterial ribosomal protein bL32 family.

This chain is Large ribosomal subunit protein bL32, found in Acidovorax ebreus (strain TPSY) (Diaphorobacter sp. (strain TPSY)).